The chain runs to 312 residues: Ribosomal protein L11 methyltransferase (312 aa).

The S-adenosyl-L-methionine site is built by T160, G181, D203, and N246.

The protein belongs to the methyltransferase superfamily. PrmA family.

Its subcellular location is the cytoplasm. It catalyses the reaction L-lysyl-[protein] + 3 S-adenosyl-L-methionine = N(6),N(6),N(6)-trimethyl-L-lysyl-[protein] + 3 S-adenosyl-L-homocysteine + 3 H(+). Its function is as follows. Methylates ribosomal protein L11. The sequence is that of Ribosomal protein L11 methyltransferase from Staphylococcus epidermidis (strain ATCC 12228 / FDA PCI 1200).